The chain runs to 222 residues: Peptidyl-prolyl cis-trans isomerase FKBP7 (222 aa).

Positions 1 to 23 (MPKTMHFLFRFIVFFYLWGLFTA) are cleaved as a signal peptide. N45 is a glycosylation site (N-linked (GlcNAc...) asparagine). The 93-residue stretch at 53–145 (GDLLNAHYDG…IFEIELYAVT (93 aa)) folds into the PPIase FKBP-type domain. EF-hand domains follow at residues 145 to 180 (TKGP…EFEK) and 189 to 222 (YQDA…HDEL). D158, D160, D162, Q164, E169, D202, D204, D206, and E213 together coordinate Ca(2+). Residues 200-222 (KNDHDGDGFISPKEYNVYQHDEL) form a disordered region. The short motif at 219–222 (HDEL) is the Retention in the endoplasmic reticulum element.

Glycosylated.

Its subcellular location is the endoplasmic reticulum lumen. The catalysed reaction is [protein]-peptidylproline (omega=180) = [protein]-peptidylproline (omega=0). PPIases accelerate the folding of proteins during protein synthesis. This chain is Peptidyl-prolyl cis-trans isomerase FKBP7 (FKBP7), found in Homo sapiens (Human).